The primary structure comprises 1574 residues: Centrosomal protein of 170 kDa protein B (1574 aa).

An FHA domain is found at 23–73; that stretch reads IFVGRDECELMLQSRSVDKQHAVINYDQDRDEHWVKDLGSLNGTFVNDVRI. 3 disordered regions span residues 121–258, 316–395, and 409–578; these read VSVK…GVGG, DWLV…RDPQ, and FDGD…QDQE. Basic and acidic residues-rich tracts occupy residues 147-157, 182-197, and 325-344; these read RPEKGDRRHGA, SEDR…RPKD, and LLRR…DLPV. S360 carries the phosphoserine modification. Over residues 370 to 382 the composition is skewed to low complexity; it reads ASVSGASAEASGE. S421 carries the phosphoserine modification. Residues 430–446 show a composition bias toward basic and acidic residues; the sequence is PKADKRRGPGTSDRDRP. A compositionally biased stretch (polar residues) spans 452 to 463; the sequence is ATGSSSGPQRAS. The segment covering 465-474 has biased composition (basic and acidic residues); it reads LKREKTEERL. The segment covering 475–488 has biased composition (polar residues); it reads GNTSPVPRASTRSF. Phosphoserine is present on residues S478 and S490. Positions 518–528 are enriched in pro residues; it reads EKTPPVLPAPL. The residue at position 534 (S534) is a Phosphoserine. A phosphothreonine mark is found at T540 and T541. Residues S595, S617, S653, S709, S744, S746, S749, S751, S819, and S843 each carry the phosphoserine modification. Disordered stretches follow at residues 637 to 826, 839 to 882, 924 to 1300, 1333 to 1358, 1377 to 1407, and 1510 to 1535; these read PGMA…RDGL, RSGR…HISS, SKSA…DPYG, AGDG…NTPA, NFQK…TNKT, and NRAP…TSPA. Residues 857-867 are compositionally biased toward polar residues; sequence FARQESFTKEP. At S947 the chain carries Phosphoserine. Residues 950 to 959 are compositionally biased toward polar residues; that stretch reads DTASTISLLS. Residues S965 and S981 each carry the phosphoserine modification. Over residues 996-1005 the composition is skewed to basic and acidic residues; it reads ARERMSERQH. A compositionally biased stretch (polar residues) spans 1084–1102; that stretch reads RSSATAQKVQQALTRSNSL. A Phosphoserine modification is found at S1122. The span at 1134–1146 shows a compositional bias: low complexity; sequence AANPEPANRAAPE. S1166 and S1186 each carry phosphoserine. The span at 1199–1213 shows a compositional bias: low complexity; that stretch reads AEARAAAKKAAATAA. Residues 1265 to 1282 show a composition bias toward polar residues; that stretch reads HASTATQTPRGSSSTRAR. A Phosphothreonine modification is found at T1289. Position 1341 is a phosphoserine (S1341). Polar residues-rich tracts occupy residues 1344-1358 and 1385-1396; these read PTRS…NTPA and SMNSHNLDQNMN. A Phosphothreonine modification is found at T1345. At S1347 the chain carries Phosphoserine. Residues S1530 and S1533 each carry the phosphoserine modification.

Belongs to the CEP170 family.

The protein localises to the cytoplasm. Its subcellular location is the cytoskeleton. Its function is as follows. Plays a role in microtubule organization. This Mus musculus (Mouse) protein is Centrosomal protein of 170 kDa protein B (Cep170b).